We begin with the raw amino-acid sequence, 101 residues long: Small ribosomal subunit protein bS18c (101 aa).

Belongs to the bacterial ribosomal protein bS18 family. As to quaternary structure, part of the 30S ribosomal subunit.

It localises to the plastid. It is found in the chloroplast. The sequence is that of Small ribosomal subunit protein bS18c from Gossypium hirsutum (Upland cotton).